The following is a 73-amino-acid chain: Conotoxin Leo-O2 (73 aa).

An N-terminal signal peptide occupies residues 1–22 (MKLTCVLIIAVLFLTACQLVTA). The propeptide occupies 23–47 (DYSGDEQQYRAMRLIDAMRNFGDTR). Disulfide bonds link Cys-49/Cys-59, Cys-56/Cys-64, and Cys-58/Cys-69.

This sequence belongs to the conotoxin O1 superfamily. In terms of tissue distribution, expressed by the venom duct.

It is found in the secreted. This Conus leopardus (Leopard cone) protein is Conotoxin Leo-O2.